The sequence spans 142 residues: Large ribosomal subunit protein uL13 (142 aa).

It belongs to the universal ribosomal protein uL13 family. As to quaternary structure, part of the 50S ribosomal subunit.

In terms of biological role, this protein is one of the early assembly proteins of the 50S ribosomal subunit, although it is not seen to bind rRNA by itself. It is important during the early stages of 50S assembly. This Proteus mirabilis (strain HI4320) protein is Large ribosomal subunit protein uL13.